We begin with the raw amino-acid sequence, 97 residues long: Citrate lyase acyl carrier protein (97 aa).

Serine 14 carries the O-(phosphoribosyl dephospho-coenzyme A)serine modification.

It belongs to the CitD family. As to quaternary structure, oligomer with a subunit composition of (alpha,beta,gamma)6.

Its subcellular location is the cytoplasm. In terms of biological role, covalent carrier of the coenzyme of citrate lyase. This chain is Citrate lyase acyl carrier protein, found in Enterobacter sp. (strain 638).